The sequence spans 200 residues: Glycerol-3-phosphate acyltransferase (200 aa).

5 consecutive transmembrane segments (helical) span residues M1–G21, G53–A73, W81–G101, M114–I134, and I139–G159.

It belongs to the PlsY family. Probably interacts with PlsX.

The protein resides in the cell inner membrane. It carries out the reaction an acyl phosphate + sn-glycerol 3-phosphate = a 1-acyl-sn-glycero-3-phosphate + phosphate. The protein operates within lipid metabolism; phospholipid metabolism. Catalyzes the transfer of an acyl group from acyl-phosphate (acyl-PO(4)) to glycerol-3-phosphate (G3P) to form lysophosphatidic acid (LPA). This enzyme utilizes acyl-phosphate as fatty acyl donor, but not acyl-CoA or acyl-ACP. The sequence is that of Glycerol-3-phosphate acyltransferase from Synechococcus sp. (strain CC9902).